We begin with the raw amino-acid sequence, 302 residues long: Methionyl-tRNA formyltransferase (302 aa).

(6S)-5,6,7,8-tetrahydrofolate is bound at residue 109–112 (SILP).

It belongs to the Fmt family.

It catalyses the reaction L-methionyl-tRNA(fMet) + (6R)-10-formyltetrahydrofolate = N-formyl-L-methionyl-tRNA(fMet) + (6S)-5,6,7,8-tetrahydrofolate + H(+). Its function is as follows. Attaches a formyl group to the free amino group of methionyl-tRNA(fMet). The formyl group appears to play a dual role in the initiator identity of N-formylmethionyl-tRNA by promoting its recognition by IF2 and preventing the misappropriation of this tRNA by the elongation apparatus. This chain is Methionyl-tRNA formyltransferase, found in Campylobacter hominis (strain ATCC BAA-381 / DSM 21671 / CCUG 45161 / LMG 19568 / NCTC 13146 / CH001A).